The following is a 174-amino-acid chain: Inner membrane protein p22 (174 aa).

Residues 1-7 (MLHIKMT) are Intravirion-facing. Residues 8–28 (ISTLLIALIVLLIIILVVFLY) traverse the membrane as a helical segment. The Virion surface segment spans residues 29 to 174 (HKKQQPPKKV…LYLPRNHKYA (146 aa)).

The protein belongs to the asfivirus inner membrane protein p22 family.

The protein localises to the virion membrane. Its subcellular location is the host cell membrane. In African swine fever virus (isolate Pig/Kenya/KEN-50/1950) (ASFV), this protein is Inner membrane protein p22.